A 213-amino-acid chain; its full sequence is Thymidine kinase (213 aa).

Residues 20 to 27 (GPMFSGKT) and 93 to 96 (DEAQ) contribute to the ATP site. Glutamate 94 acts as the Proton acceptor in catalysis. Cysteine 150, cysteine 153, cysteine 185, and histidine 188 together coordinate Zn(2+).

This sequence belongs to the thymidine kinase family. As to quaternary structure, homotetramer.

Its subcellular location is the cytoplasm. It catalyses the reaction thymidine + ATP = dTMP + ADP + H(+). The sequence is that of Thymidine kinase from Mycoplasma genitalium (strain ATCC 33530 / DSM 19775 / NCTC 10195 / G37) (Mycoplasmoides genitalium).